Reading from the N-terminus, the 144-residue chain is Large ribosomal subunit protein uL16 (144 aa).

This sequence belongs to the universal ribosomal protein uL16 family. In terms of assembly, part of the 50S ribosomal subunit.

Functionally, binds 23S rRNA and is also seen to make contacts with the A and possibly P site tRNAs. This is Large ribosomal subunit protein uL16 from Natranaerobius thermophilus (strain ATCC BAA-1301 / DSM 18059 / JW/NM-WN-LF).